The sequence spans 247 residues: 2-dehydro-3-deoxy-phosphogluconate aldolase (247 aa).

It belongs to the DagF family.

The enzyme catalyses 2-dehydro-3-deoxy-6-phospho-D-gluconate = D-glyceraldehyde 3-phosphate + pyruvate. Involved in the catabolism of D-glucosaminate. Catalyzes the conversion of keto-3-deoxygluconate 6-phosphate (KDGP) to yield pyruvate and glyceraldehyde-3-phosphate. This chain is 2-dehydro-3-deoxy-phosphogluconate aldolase, found in Salmonella typhimurium (strain 14028s / SGSC 2262).